We begin with the raw amino-acid sequence, 410 residues long: Chloroacetanilide N-alkylformylase, ferredoxin reductase component (410 aa).

FAD is bound by residues Gly-14, Asp-36, Lys-49, Val-82, Arg-130, Asp-279, and Val-298.

It belongs to the FAD-dependent oxidoreductase family. In terms of assembly, the chloroacetanilide N-alkylformylase multicomponent enzyme system is composed of an oxygenase component (CndA) and an electron transfer component formed by a ferredoxin reductase (CndC1) and a ferredoxin (CndB1). In vitro, chloroacetanilide N-alkylformylase assays in which CndB1 is substituted for CndB2 demonstrate that the two enzymes possess nearly identical activities. FAD is required as a cofactor.

The catalysed reaction is 2 reduced [2Fe-2S]-[ferredoxin] + NAD(+) + H(+) = 2 oxidized [2Fe-2S]-[ferredoxin] + NADH. Functionally, component of the chloroacetanilide N-alkylformylase multicomponent enzyme system involved in the degradation of chloroacetanilide herbicides (N-alkoxyalkyl-N-chloroacetyl-substituted aniline derivatives). In vitro, catalyzes the transfers of electrons from ferredoxin (CndB1) to NADH. N-dealkylase utilizes NADH, but not NADPH, as the electron donor. The sequence is that of Chloroacetanilide N-alkylformylase, ferredoxin reductase component from Rhizorhabdus wittichii (strain DC-6 / KACC 16600) (Sphingomonas wittichii).